Reading from the N-terminus, the 1077-residue chain is RNA polymerase-associated protein CTR9 (1077 aa).

TPR repeat units follow at residues 56 to 89, 138 to 174, 183 to 216, 218 to 251, 298 to 332, 338 to 371, 373 to 405, 421 to 455, 462 to 495, 501 to 534, 540 to 572, 664 to 697, 699 to 731, 732 to 764, 768 to 801, and 830 to 863; these read KEHWLTIALAYCNHGKTNEGIKLIEMALDVFQNS, IGNMLATVELYYQRGHYDKALETSDLFVKSIHAEDHR, CLFLLLRAKLLYQKKNYMASLKIFQELLVINPVL, PDPRIGIGLCFWQLKDSKMAIKSWQRALQLNPKN, PVLLTLLQTYYYFKGDYQTVLDIYHHRILKMSPMI, SESSFWCGRAHYALGDYRKSFIMFQESLKKNEDN, LAKLGLGQTQIKNNLLEESIITFENLYKTNESL, FDAKTAKNTSAKEQSNLNEKALKYLERYLKLTLAT, SRAYLVISQLYELQNQYKTSLDYLSKALEEMEFI, LEVLNNLACYHFINGDFIKADDLFKQAKAKVSDK, ITLEYNIARTNEKNDCEKSESIYSQVTSLHPAY, GKKSRNPKEQEKSKHSYLKAIQLYQKVLQVDPFN, FAAQGLAIIFAESKRLGPALEILRKVRDSLDNE, DVQLNLAHCYLEMREYGKAIENYELVLKKFDNE, PHILNLLGRAWYARAIKERSVNFYQKALENAKTA, and AETLRRSNPKFRTVQQIKDSLEGLKEGLELFREL. Over residues 959–980 the composition is skewed to basic and acidic residues; sequence EREAMAISEHNVKDDSDLSDKD. Residues 959–1077 are disordered; the sequence is EREAMAISEH…NDNDDNDGLF (119 aa). Residues Ser-1015 and Ser-1017 each carry the phosphoserine modification. Acidic residues-rich tracts occupy residues 1042–1051 and 1063–1077; these read FIEDSDEEEA and DNDENNDNDDNDGLF.

In terms of assembly, component of the PAF1 complex which consists of at least CDC73, CTR9, LEO1, PAF1 and RTF1. Interacts with SPT6. Interacts with FACT subunits POB3 and SPT16.

Its subcellular location is the nucleus. The protein localises to the nucleoplasm. The PAF1 complex is a multifunctional complex. Involved in transcription initiation via genetic interactions with TATA-binding proteins. Involved in elongation. It regulates 3'-end formation of snR47 by modulating the recruitment or stable association of NRD1 and NAB3 with RNA polymerase II. Also has a role in transcription-coupled histone modification. Required for activation of RAD6 ubiquitin conjugate and the BRE1 ubiquitin ligase which ubiquitinate 'Lys-126' histone H2B. Activates the SET1 histone methyltransferase complex for methylation of 'Lys-4' of histone H3 and for methylation of 'Lys-73' of histone H3 by DOT1 and 'Lys-36' of histone H3 by SET2. In complex with PAF1, required for normal CLN1 and CLN2 G1 cyclin expression in late G1. Also has a role in chromosome segregation where it appears to be involved in microtubule placement. The chain is RNA polymerase-associated protein CTR9 (CTR9) from Saccharomyces cerevisiae (strain ATCC 204508 / S288c) (Baker's yeast).